Consider the following 223-residue polypeptide: Protein-L-isoaspartate O-methyltransferase (223 aa).

S70 is an active-site residue.

The protein belongs to the methyltransferase superfamily. L-isoaspartyl/D-aspartyl protein methyltransferase family.

Its subcellular location is the cytoplasm. It carries out the reaction [protein]-L-isoaspartate + S-adenosyl-L-methionine = [protein]-L-isoaspartate alpha-methyl ester + S-adenosyl-L-homocysteine. Its function is as follows. Catalyzes the methyl esterification of L-isoaspartyl residues in peptides and proteins that result from spontaneous decomposition of normal L-aspartyl and L-asparaginyl residues. It plays a role in the repair and/or degradation of damaged proteins. This chain is Protein-L-isoaspartate O-methyltransferase, found in Methylobacillus flagellatus (strain ATCC 51484 / DSM 6875 / VKM B-1610 / KT).